The chain runs to 258 residues: Acetylglutamate kinase (258 aa).

Residues 44-45, arginine 66, and asparagine 158 each bind substrate; that span reads GG. ATP-binding positions include 181–186 and 209–211; these read DVSGIL and IIT.

The protein belongs to the acetylglutamate kinase family. ArgB subfamily. In terms of assembly, homodimer.

It localises to the cytoplasm. It carries out the reaction N-acetyl-L-glutamate + ATP = N-acetyl-L-glutamyl 5-phosphate + ADP. It functions in the pathway amino-acid biosynthesis; L-arginine biosynthesis; N(2)-acetyl-L-ornithine from L-glutamate: step 2/4. Catalyzes the ATP-dependent phosphorylation of N-acetyl-L-glutamate. The protein is Acetylglutamate kinase of Shigella dysenteriae serotype 1 (strain Sd197).